A 444-amino-acid chain; its full sequence is 23S rRNA (uracil(1939)-C(5))-methyltransferase RlmD (444 aa).

Residues 5–64 (KPKLNLTSQTARIVNLSHDGRGIARVNGKATFIQGALPGEVVEFQYTRIKKDFDEGKLLS) enclose the TRAM domain. Residues Cys-77, Cys-83, Cys-86, and Cys-166 each contribute to the [4Fe-4S] cluster site. S-adenosyl-L-methionine contacts are provided by Gln-276, Phe-305, Asn-310, Glu-326, Asn-353, and Asp-374. The Nucleophile role is filled by Cys-400.

Belongs to the class I-like SAM-binding methyltransferase superfamily. RNA M5U methyltransferase family. RlmD subfamily.

The catalysed reaction is uridine(1939) in 23S rRNA + S-adenosyl-L-methionine = 5-methyluridine(1939) in 23S rRNA + S-adenosyl-L-homocysteine + H(+). Its function is as follows. Catalyzes the formation of 5-methyl-uridine at position 1939 (m5U1939) in 23S rRNA. The chain is 23S rRNA (uracil(1939)-C(5))-methyltransferase RlmD from Legionella pneumophila (strain Corby).